A 351-amino-acid polypeptide reads, in one-letter code: Fe(3+) ions import ATP-binding protein FbpC (351 aa).

One can recognise an ABC transporter domain in the interval 9 to 239 (LVLKNINKTF…PNSLFLANFM (231 aa)). 41-48 (GPSGCGKT) is an ATP binding site.

The protein belongs to the ABC transporter superfamily. Fe(3+) ion importer (TC 3.A.1.10) family. The complex is composed of two ATP-binding proteins (FbpC), two transmembrane proteins (FbpB) and a solute-binding protein (FbpA).

The protein resides in the cell inner membrane. It carries out the reaction Fe(3+)(out) + ATP + H2O = Fe(3+)(in) + ADP + phosphate + H(+). In terms of biological role, part of the ABC transporter complex FbpABC involved in Fe(3+) ions import. Responsible for energy coupling to the transport system. The polypeptide is Fe(3+) ions import ATP-binding protein FbpC (Mannheimia succiniciproducens (strain KCTC 0769BP / MBEL55E)).